Here is an 88-residue protein sequence, read N- to C-terminus: Small ribosomal subunit protein eS21 (88 aa).

It belongs to the eukaryotic ribosomal protein eS21 family. As to quaternary structure, component of the small ribosomal subunit. Mature ribosomes consist of a small (40S) and a large (60S) subunit. The 40S subunit contains about 33 different proteins and 1 molecule of RNA (18S). The 60S subunit contains about 49 different proteins and 3 molecules of RNA (25S, 5.8S and 5S).

It localises to the cytoplasm. Required for the processing of the 20S rRNA-precursor to mature 18S rRNA in a late step of the maturation of 40S ribosomal subunits. Has a physiological role leading to 18S rRNA stability. This chain is Small ribosomal subunit protein eS21 (rps21), found in Aspergillus fumigatus (strain ATCC MYA-4609 / CBS 101355 / FGSC A1100 / Af293) (Neosartorya fumigata).